A 449-amino-acid chain; its full sequence is MHSRQQTIFALSSGRPPAALAIVRVSGPEAAIVLERIAGRLPPPRQAMRALLHDASAQPIDDAIVLWFPAPRSATGEDVAEFHIHGGRAVLSAVIAAIGTNENLRAAEPGEFTRRAFENGKLDLTEAEGLDDLIHADTERQRRQALRQLQGLLGDRARDWRGEIIAASALVEAAIDFADEGDVPDELIAPAKAKIEILLDEIEDVLAQEGRSEKLRDGLVVAITGPPNVGKSTLMNQLARREVAIVSPHAGTTRDIIEVHLDLDGYPVTVIDTAGIREAIDPVEQEGVRRARSRAAEADLRLWLVDAQAAGDGEDALRAWMAQGQNGFWVVRNKVDVAGEPTGELSATGWPCFSISAANGRGVAELIAALGKFAAAHLGGESALITRARHRDLLRQTADALGRAIDLPEQVELIAEELRIAAHRLGQLLGRVDVEDILDVIFREFCVGK.

Positions 24, 81, and 121 each coordinate (6S)-5-formyl-5,6,7,8-tetrahydrofolate. The 158-residue stretch at G218 to A375 folds into the TrmE-type G domain. Residues N228–T233, S247–T253, and D272–G275 each bind GTP. Mg(2+) is bound by residues S232 and T253. A (6S)-5-formyl-5,6,7,8-tetrahydrofolate-binding site is contributed by K449.

It belongs to the TRAFAC class TrmE-Era-EngA-EngB-Septin-like GTPase superfamily. TrmE GTPase family. In terms of assembly, homodimer. Heterotetramer of two MnmE and two MnmG subunits. It depends on K(+) as a cofactor.

It is found in the cytoplasm. In terms of biological role, exhibits a very high intrinsic GTPase hydrolysis rate. Involved in the addition of a carboxymethylaminomethyl (cmnm) group at the wobble position (U34) of certain tRNAs, forming tRNA-cmnm(5)s(2)U34. The polypeptide is tRNA modification GTPase MnmE (Rhodopseudomonas palustris (strain BisB18)).